The following is a 1335-amino-acid chain: Aldehyde oxidase 2 (1335 aa).

The 88-residue stretch at 8 to 95 (DVLVFFVNGR…GAAVTTVEGV (88 aa)) folds into the 2Fe-2S ferredoxin-type domain. Residues C47, C52, C55, and C77 each contribute to the [2Fe-2S] cluster site. Residue Q116 coordinates Mo-molybdopterin. 4 residues coordinate [2Fe-2S] cluster: C117, C120, C152, and C154. Mo-molybdopterin is bound at residue C154. One can recognise an FAD-binding PCMH-type domain in the interval 242-427 (FRGDRVTWVS…ESVHIPHSQK (186 aa)). FAD-binding positions include 270 to 277 (LVLGNTAL), A351, S360, H364, D373, and L417. Mo-molybdopterin is bound by residues 821 to 822 (GF), 1103 to 1106 (ASVG), Q1218, and L1285. Residue E1287 is the Proton acceptor; for azaheterocycle hydroxylase activity of the active site.

It belongs to the xanthine dehydrogenase family. Homodimer. The cofactor is [2Fe-2S] cluster. Requires FAD as cofactor. It depends on Mo-molybdopterin as a cofactor. As to expression, detected in kidney, Harderian gland and olfactory mucosa.

It is found in the cytoplasm. It carries out the reaction an aldehyde + O2 + H2O = a carboxylate + H2O2 + H(+). Functionally, oxidase with broad substrate specificity, oxidizing aromatic azaheterocycles, such as phthalazine, as well as aldehydes, such as benzaldehyde and retinal. The sequence is that of Aldehyde oxidase 2 (AOX2) from Cavia porcellus (Guinea pig).